Reading from the N-terminus, the 187-residue chain is Chlorobenzene dioxygenase subunit beta (187 aa).

The protein belongs to the bacterial ring-hydroxylating dioxygenase beta subunit family. This dioxygenase system consists of four proteins: the two subunits of the oxygenase component (TecA1 and TecA2), a ferredoxin (TecA3) and a ferredoxin reductase (TecA4).

The enzyme catalyses chlorobenzene + NADH + O2 + H(+) = (1R,2R)-3-chlorocyclohexa-3,5-diene-1,2-diol + NAD(+). The protein operates within aromatic compound metabolism. In terms of biological role, part of the oxygenase component of the chlorobenzene dioxygenase system that catalyzes the dihydroxylation of a range of aromatic compounds, including chlorinated benzenes and toluenes, and dinuclear aromatics such as biphenyl and dibenzo-p-dioxin. The beta subunit is not directly involved in the control of substrate specificity. This chain is Chlorobenzene dioxygenase subunit beta, found in Cupriavidus sp. (strain PS12).